The sequence spans 507 residues: Subtilisin-like protease 1 (507 aa).

Positions methionine 1–alanine 19 are cleaved as a signal peptide. A propeptide spanning residues alanine 20–asparagine 116 is cleaved from the precursor. The 80-residue stretch at serine 34–isoleucine 113 folds into the Inhibitor I9 domain. The region spanning serine 126–lysine 400 is the Peptidase S8 domain. Active-site charge relay system residues include aspartate 158 and histidine 190. Residues glycine 175 to methionine 198 form a disordered region. An N-linked (GlcNAc...) asparagine glycan is attached at asparagine 251. A compositionally biased stretch (polar residues) spans asparagine 282–serine 294. The disordered stretch occupies residues asparagine 282–serine 312. Catalysis depends on serine 345, which acts as the Charge relay system. Residues serine 378–isoleucine 394 show a composition bias toward polar residues. Residues serine 378–aspartate 486 form a disordered region. Composition is skewed to pro residues over residues lysine 405–proline 428 and glutamate 438–proline 449. Positions phenylalanine 450 to proline 461 are enriched in low complexity. The span at alanine 462–proline 476 shows a compositional bias: pro residues.

Belongs to the peptidase S8 family.

The protein localises to the secreted. In terms of biological role, secreted subtilisin-like serine protease with keratinolytic activity that contributes to pathogenicity. The protein is Subtilisin-like protease 1 (SUB1) of Trichophyton equinum (Horse ringworm fungus).